Reading from the N-terminus, the 477-residue chain is MIHQHPESFPKHFLWGSASAAYQIEGAWNEDGKGPSVWDVFTKIPGKTFKGTNGEIAVDHYHRFKEDVALMAEMGLKAYRFSVSWPRVFPKGKGEINEAGLAFYDSLIDELLSHHIEPVLTLYHWDLPQALMDEYGGFESRNIIEDFNHYCITLYKRFGDRVKYWVTLNEQNYNFNHGFITAMHPPGVKDRKRFYEANHIAFLANAKAIESFREYVPEGKIGPSFAYSPAYPLSSHPEDILAFENAEEFTNNWWLDMYCWGTYPQIPFRCLEKQGWAPTIEAGDMDLLAKGKPDFVGVNYYQTITYERNPLDGVSEGKMNTTGQKGTNQETGIPGVFKTKKNPHLTTSNWDWTIDPIGLRIGLRRITSRYQLPVFITENGLGEFDKVEDGTVQDDYRIDYLRSHLEQCRQAISDGVDLIGYCSWSFTDLLSWLNGYQKRYGFVYVNRDEESTSDLKRLKKKSFYWYQDVIKTNGESL.

E170 (proton donor) is an active-site residue. The active-site Nucleophile is the E378.

It belongs to the glycosyl hydrolase 1 family.

It carries out the reaction 6-phospho-beta-D-glucosyl-(1-&gt;4)-D-glucose + H2O = D-glucose 6-phosphate + D-glucose. In terms of biological role, is able to catalyze the hydrolysis of aryl-phospho-beta-D-glucosides such as 4-methylumbelliferyl-phospho-beta-D-glucopyranoside (MUG-P), phosphoarbutin and phosphosalicin. Is not essential for growth on arbutin and salicin as the sole carbon source. The polypeptide is Aryl-phospho-beta-D-glucosidase BglC (bglC) (Bacillus subtilis (strain 168)).